We begin with the raw amino-acid sequence, 112 residues long: Protein AV2 (112 aa).

The protein belongs to the geminiviridae protein AV2/V2 family. In terms of assembly, interacts with host SGS3.

It is found in the host cytoplasm. It localises to the host perinuclear region. In terms of biological role, through its interaction with host SGS3, acts as a suppressor of RNA-mediated gene silencing, also known as post-transcriptional gene silencing (PTGS), a mechanism of plant viral defense that limits the accumulation of viral RNAs. This chain is Protein AV2, found in Indian cassava mosaic virus (ICMV).